The primary structure comprises 122 residues: Large ribosomal subunit protein uL14c (122 aa).

The protein belongs to the universal ribosomal protein uL14 family. As to quaternary structure, part of the 50S ribosomal subunit.

It is found in the plastid. Its subcellular location is the chloroplast. In terms of biological role, binds to 23S rRNA. This is Large ribosomal subunit protein uL14c from Piper cenocladum (Ant piper).